Consider the following 366-residue polypeptide: Peptide chain release factor 2 (366 aa).

The residue at position 251 (Q251) is an N5-methylglutamine.

This sequence belongs to the prokaryotic/mitochondrial release factor family. Methylated by PrmC. Methylation increases the termination efficiency of RF2.

The protein resides in the cytoplasm. Functionally, peptide chain release factor 2 directs the termination of translation in response to the peptide chain termination codons UGA and UAA. This Listeria monocytogenes serotype 4b (strain F2365) protein is Peptide chain release factor 2 (prfB).